Here is a 400-residue protein sequence, read N- to C-terminus: Putative niacin/nicotinamide transporter NiaP (400 aa).

Topologically, residues 1 to 14 (MGKQQPISQRKLLG) are cytoplasmic. The chain crosses the membrane as a helical span at residues 15-35 (VAGLGWLFDAMDVGILSFIIA). Residues 36 to 49 (ALHVEWNLSPEEMK) are Extracellular-facing. A helical transmembrane segment spans residues 50–70 (WIGSVNSIGMAAGAFLFGLLA). The Cytoplasmic portion of the chain corresponds to 71 to 77 (DRIGRKK). 2 helical membrane-spanning segments follow: residues 78–98 (VFII…FVTS) and 99–119 (LSAF…ELPV). Residues 120–142 (ASTLVSEAVVPEKRGRVIVLLES) are Cytoplasmic-facing. Residues 143-163 (FWAVGWLAAALISYFVIPSFG) form a helical membrane-spanning segment. At 164–165 (WQ) the chain is on the extracellular side. A helical membrane pass occupies residues 166-186 (AALLLTALTAFYALYLRTSLP). Topologically, residues 187 to 217 (DSPKYESLSAKKRSMWENVKSVWARQYIRPT) are cytoplasmic. The helical transmembrane segment at 218 to 238 (VMLSIVWFCVVFSYYGMFLWL) threads the bilayer. Topologically, residues 239 to 253 (PSVMLLKGFSMIQSF) are extracellular. Residues 254-274 (EYVLLMTLAQLPGYFSAAWLI) traverse the membrane as a helical segment. Residues 275 to 280 (EKAGRK) lie on the Cytoplasmic side of the membrane. A helical membrane pass occupies residues 281 to 301 (WILVVYLIGTAGSAYFFGTAD). At 302–304 (SLS) the chain is on the extracellular side. Residues 305 to 325 (LLLTAGVLLSFFNLGAWGVLY) traverse the membrane as a helical segment. Residues 326–343 (AYTPEQYPTAIRATGSGT) lie on the Cytoplasmic side of the membrane. Residues 344 to 364 (TAAFGRIGGIFGPLLVGTLAA) traverse the membrane as a helical segment. The Extracellular segment spans residues 365-370 (RHISFS). Residues 371-391 (VIFSIFCIAILLAVACILIMG) form a helical membrane-spanning segment. At 392 to 400 (KETKQTELE) the chain is on the cytoplasmic side.

It belongs to the major facilitator superfamily. Sugar transporter (TC 2.A.1.1) family.

The protein localises to the cell membrane. Functionally, probably involved in the uptake of amidated and deamidated forms of niacin. Increases the growth rate of E.coli that is unable to make niacin de novo; confers increased sensitivity to the toxic niacin analog 6-amino-nicotinamide to wild-type E.coli. There is probably another mechanism for niacin uptake. This is Putative niacin/nicotinamide transporter NiaP from Bacillus subtilis (strain 168).